The following is a 180-amino-acid chain: UPF0134 protein MPN_127 (180 aa).

The protein belongs to the UPF0134 family.

This Mycoplasma pneumoniae (strain ATCC 29342 / M129 / Subtype 1) (Mycoplasmoides pneumoniae) protein is UPF0134 protein MPN_127.